Here is a 409-residue protein sequence, read N- to C-terminus: FADH(2)-dependent resorcinol hydroxylase, oxygenase component (409 aa).

The protein belongs to the HpaH/HsaA monooxygenase family. As to quaternary structure, the FADH(2)-dependent resorcinol hydroxylase is composed of two subunits, GraA (the oxygenase component) and GraD (the reductase component). Both subunits are required for activity.

It carries out the reaction resorcinol + FADH2 + O2 = benzene-1,2,4-triol + FAD + H2O + H(+). It participates in aromatic compound metabolism. Involved in the gamma-resorcylate (2,6-dihydroxybenzoate) catabolism. Oxygenase component of the resorcinol hydroxylase, which catalyzes the FADH(2)-dependent conversion of resorcinol to hydroxyquinol. The protein is FADH(2)-dependent resorcinol hydroxylase, oxygenase component of Rhizobium sp. (strain MTP-10005).